Reading from the N-terminus, the 969-residue chain is Leucine--tRNA ligase (969 aa).

The 'HIGH' region motif lies at 78–89 (PYPSGEGLHVGH). Residues 739-743 (KIGKS) carry the 'KMSKS' region motif. Lysine 742 is a binding site for ATP.

It belongs to the class-I aminoacyl-tRNA synthetase family.

It localises to the cytoplasm. The catalysed reaction is tRNA(Leu) + L-leucine + ATP = L-leucyl-tRNA(Leu) + AMP + diphosphate. The protein is Leucine--tRNA ligase of Mycobacterium tuberculosis (strain ATCC 25177 / H37Ra).